The sequence spans 305 residues: UDP-3-O-acyl-N-acetylglucosamine deacetylase (305 aa).

Zn(2+) is bound by residues His79, His238, and Asp242. His265 serves as the catalytic Proton donor.

The protein belongs to the LpxC family. Zn(2+) is required as a cofactor.

The catalysed reaction is a UDP-3-O-[(3R)-3-hydroxyacyl]-N-acetyl-alpha-D-glucosamine + H2O = a UDP-3-O-[(3R)-3-hydroxyacyl]-alpha-D-glucosamine + acetate. Its pathway is glycolipid biosynthesis; lipid IV(A) biosynthesis; lipid IV(A) from (3R)-3-hydroxytetradecanoyl-[acyl-carrier-protein] and UDP-N-acetyl-alpha-D-glucosamine: step 2/6. Catalyzes the hydrolysis of UDP-3-O-myristoyl-N-acetylglucosamine to form UDP-3-O-myristoylglucosamine and acetate, the committed step in lipid A biosynthesis. The chain is UDP-3-O-acyl-N-acetylglucosamine deacetylase from Cronobacter sakazakii (strain ATCC BAA-894) (Enterobacter sakazakii).